Here is a 531-residue protein sequence, read N- to C-terminus: Arginine--tRNA ligase (531 aa).

The short motif at 113–123 (ANPTGPLHIGH) is the 'HIGH' region element.

The protein belongs to the class-I aminoacyl-tRNA synthetase family. As to quaternary structure, monomer.

It is found in the cytoplasm. The enzyme catalyses tRNA(Arg) + L-arginine + ATP = L-arginyl-tRNA(Arg) + AMP + diphosphate. This chain is Arginine--tRNA ligase, found in Campylobacter lari (strain RM2100 / D67 / ATCC BAA-1060).